We begin with the raw amino-acid sequence, 616 residues long: Chaperone protein HscA homolog (616 aa).

It belongs to the heat shock protein 70 family.

Its function is as follows. Chaperone involved in the maturation of iron-sulfur cluster-containing proteins. Has a low intrinsic ATPase activity which is markedly stimulated by HscB. In Aliivibrio fischeri (strain ATCC 700601 / ES114) (Vibrio fischeri), this protein is Chaperone protein HscA homolog.